The following is a 216-amino-acid chain: ATP phosphoribosyltransferase (216 aa).

The protein belongs to the ATP phosphoribosyltransferase family. Short subfamily. In terms of assembly, heteromultimer composed of HisG and HisZ subunits.

It localises to the cytoplasm. It carries out the reaction 1-(5-phospho-beta-D-ribosyl)-ATP + diphosphate = 5-phospho-alpha-D-ribose 1-diphosphate + ATP. The protein operates within amino-acid biosynthesis; L-histidine biosynthesis; L-histidine from 5-phospho-alpha-D-ribose 1-diphosphate: step 1/9. Its function is as follows. Catalyzes the condensation of ATP and 5-phosphoribose 1-diphosphate to form N'-(5'-phosphoribosyl)-ATP (PR-ATP). Has a crucial role in the pathway because the rate of histidine biosynthesis seems to be controlled primarily by regulation of HisG enzymatic activity. The polypeptide is ATP phosphoribosyltransferase (Nitrosomonas europaea (strain ATCC 19718 / CIP 103999 / KCTC 2705 / NBRC 14298)).